Reading from the N-terminus, the 329-residue chain is tRNA uridine(34) hydroxylase (329 aa).

One can recognise a Rhodanese domain in the interval 123 to 217; that stretch reads SDPETVLIDT…YLEEVPKEKS (95 aa). The active-site Cysteine persulfide intermediate is the C177. The segment at 310–329 is disordered; sequence LNKQKKQQAKEAARKKTEKN. Over residues 317–329 the composition is skewed to basic and acidic residues; the sequence is QAKEAARKKTEKN.

It belongs to the TrhO family.

The catalysed reaction is uridine(34) in tRNA + AH2 + O2 = 5-hydroxyuridine(34) in tRNA + A + H2O. Its function is as follows. Catalyzes oxygen-dependent 5-hydroxyuridine (ho5U) modification at position 34 in tRNAs. This is tRNA uridine(34) hydroxylase from Francisella tularensis subsp. novicida (strain U112).